Consider the following 351-residue polypeptide: Ferredoxin--NADP reductase (351 aa).

Aspartate 44, glutamine 52, tyrosine 57, isoleucine 97, phenylalanine 132, aspartate 296, and serine 337 together coordinate FAD.

The protein belongs to the ferredoxin--NADP reductase type 2 family. Homodimer. FAD is required as a cofactor.

It catalyses the reaction 2 reduced [2Fe-2S]-[ferredoxin] + NADP(+) + H(+) = 2 oxidized [2Fe-2S]-[ferredoxin] + NADPH. This is Ferredoxin--NADP reductase from Burkholderia vietnamiensis (strain G4 / LMG 22486) (Burkholderia cepacia (strain R1808)).